Consider the following 567-residue polypeptide: Type 2 DNA topoisomerase 6 subunit B (567 aa).

ATP contacts are provided by residues N46, D78, 99–100, 109–116, and K472; these read TK and GQQGIGIS.

It belongs to the TOP6B family. In terms of assembly, homodimer. Heterotetramer of two Top6A and two Top6B chains.

It catalyses the reaction ATP-dependent breakage, passage and rejoining of double-stranded DNA.. Functionally, relaxes both positive and negative superturns and exhibits a strong decatenase activity. The sequence is that of Type 2 DNA topoisomerase 6 subunit B from Thermococcus kodakarensis (strain ATCC BAA-918 / JCM 12380 / KOD1) (Pyrococcus kodakaraensis (strain KOD1)).